The chain runs to 308 residues: 11-beta-hydroxysteroid dehydrogenase-like 2 (308 aa).

The helical; Signal-anchor for type II membrane protein transmembrane segment at 10–30 (FLLPPLTISFLVLFYPFYLFT) threads the bilayer. NADP(+) contacts are provided by residues 53-79 (GASS…VARR) and Asp-104. Position 183 (Ser-183) interacts with substrate. Tyr-196 (proton acceptor) is an active-site residue. NADP(+) contacts are provided by residues 196 to 200 (YSASK) and Lys-200.

It belongs to the short-chain dehydrogenases/reductases (SDR) family.

The protein resides in the membrane. In Arabidopsis thaliana (Mouse-ear cress), this protein is 11-beta-hydroxysteroid dehydrogenase-like 2 (HSD2).